The primary structure comprises 202 residues: Probable nicotinate-nucleotide adenylyltransferase (202 aa).

It belongs to the NadD family.

The catalysed reaction is nicotinate beta-D-ribonucleotide + ATP + H(+) = deamido-NAD(+) + diphosphate. Its pathway is cofactor biosynthesis; NAD(+) biosynthesis; deamido-NAD(+) from nicotinate D-ribonucleotide: step 1/1. Its function is as follows. Catalyzes the reversible adenylation of nicotinate mononucleotide (NaMN) to nicotinic acid adenine dinucleotide (NaAD). The chain is Probable nicotinate-nucleotide adenylyltransferase from Bacteroides thetaiotaomicron (strain ATCC 29148 / DSM 2079 / JCM 5827 / CCUG 10774 / NCTC 10582 / VPI-5482 / E50).